We begin with the raw amino-acid sequence, 142 residues long: MKLLIALFVLVNAVIAQNGYGQGGQGPYGGQGGFGGYGGLGGQAGFGGQIGFNGQGGVGGQLGVGQGGVSPGQGGFAAQGPPNQYQPGYGSPVGSGHFHGGNPVDAGYIHGNHHEYPEHHGDHHREHHEHHGHHEHHGHHRH.

Residues 1-16 (MKLLIALFVLVNAVIA) form the signal peptide. Residues 65–77 (GQGGVSPGQGGFA) show a composition bias toward gly residues. The tract at residues 65-142 (GQGGVSPGQG…HHEHHGHHRH (78 aa)) is disordered. Residues 112–124 (NHHEYPEHHGDHH) show a composition bias toward basic and acidic residues. The span at 125–142 (REHHEHHGHHEHHGHHRH) shows a compositional bias: basic residues.

It localises to the secreted. In terms of biological role, likely to be involved in the establishment of the head. This chain is Protein spalt-accessory (sala), found in Drosophila orena (Fruit fly).